The chain runs to 450 residues: Membrane-bound lytic murein transglycosylase F 2 (450 aa).

Positions 1 to 20 (MRTWIAILAVVLVLLLNACT) are cleaved as a signal peptide. Residues 21–261 (DGPEDGPRLE…AMENRYYTYV (241 aa)) are non-LT domain. An LT domain region spans residues 262–450 (GEFDFVDLRA…YRDVIRQAFE (189 aa)). E308 is a catalytic residue.

In the N-terminal section; belongs to the bacterial solute-binding protein 3 family. This sequence in the C-terminal section; belongs to the transglycosylase Slt family.

It localises to the cell outer membrane. The catalysed reaction is Exolytic cleavage of the (1-&gt;4)-beta-glycosidic linkage between N-acetylmuramic acid (MurNAc) and N-acetylglucosamine (GlcNAc) residues in peptidoglycan, from either the reducing or the non-reducing ends of the peptidoglycan chains, with concomitant formation of a 1,6-anhydrobond in the MurNAc residue.. Functionally, murein-degrading enzyme that degrades murein glycan strands and insoluble, high-molecular weight murein sacculi, with the concomitant formation of a 1,6-anhydromuramoyl product. Lytic transglycosylases (LTs) play an integral role in the metabolism of the peptidoglycan (PG) sacculus. Their lytic action creates space within the PG sacculus to allow for its expansion as well as for the insertion of various structures such as secretion systems and flagella. This is Membrane-bound lytic murein transglycosylase F 2 from Alkalilimnicola ehrlichii (strain ATCC BAA-1101 / DSM 17681 / MLHE-1).